An 84-amino-acid chain; its full sequence is Antitoxin VapB30 (84 aa).

Its function is as follows. Antitoxin component of a type II toxin-antitoxin (TA) system. Upon expression in M.smegmatis neutralizes the effect of cognate toxin VapC30. The sequence is that of Antitoxin VapB30 (vapB30) from Mycobacterium tuberculosis (strain ATCC 25618 / H37Rv).